The primary structure comprises 781 residues: Aconitate hydratase, mitochondrial (781 aa).

The transit peptide at 1-27 (MAPYSLLVTRLQKALGVRQYHVASVLC) directs the protein to the mitochondrion. At glutamine 28 the chain carries Pyrrolidone carboxylic acid. Lysine 31 carries the N6-succinyllysine modification. Lysine 50 is subject to N6-acetyllysine; alternate. Lysine 50 is modified (N6-succinyllysine; alternate). A substrate-binding site is contributed by glutamine 99. An N6-acetyllysine; alternate mark is found at lysine 138 and lysine 144. N6-succinyllysine; alternate occurs at positions 138 and 144. 192 to 194 (DSH) contacts substrate. At lysine 233 the chain carries N6-acetyllysine; alternate. Residue lysine 233 is modified to N6-succinyllysine; alternate. Cysteine 385 is a binding site for [4Fe-4S] cluster. Residue lysine 411 is modified to N6-succinyllysine. [4Fe-4S] cluster-binding residues include cysteine 448 and cysteine 451. Substrate contacts are provided by arginine 474 and arginine 479. Residues lysine 517 and lysine 523 each carry the N6-acetyllysine; alternate modification. 2 positions are modified to N6-succinyllysine; alternate: lysine 517 and lysine 523. Residues 524 to 537 (LEAPDADELPRAEF) show a composition bias toward basic and acidic residues. The segment at 524-561 (LEAPDADELPRAEFDPGQDTYQHPPKDSSGQRVDVSPT) is disordered. N6-succinyllysine is present on lysine 549. The span at 551–561 (SSGQRVDVSPT) shows a compositional bias: polar residues. Phosphoserine is present on serine 559. An N6-acetyllysine; alternate modification is found at lysine 573. At lysine 573 the chain carries N6-succinyllysine; alternate. N6-succinyllysine is present on residues lysine 577 and lysine 591. N6-acetyllysine; alternate is present on lysine 605. Lysine 605 is modified (N6-succinyllysine; alternate). Position 607 (arginine 607) interacts with substrate. The residue at position 628 (lysine 628) is an N6-succinyllysine. Serine 670 carries the post-translational modification Phosphoserine. Residue 670–671 (SR) coordinates substrate. Lysine 689 is subject to N6-succinyllysine. N6-acetyllysine; alternate is present on residues lysine 723 and lysine 730. 2 positions are modified to N6-succinyllysine; alternate: lysine 723 and lysine 730. Residues lysine 736, lysine 739, and lysine 743 each carry the N6-acetyllysine modification.

This sequence belongs to the aconitase/IPM isomerase family. In terms of assembly, monomer. It depends on [4Fe-4S] cluster as a cofactor. Forms covalent cross-links mediated by transglutaminase TGM2, between a glutamine and the epsilon-amino group of a lysine residue, forming homopolymers and heteropolymers.

It is found in the mitochondrion. The enzyme catalyses citrate = D-threo-isocitrate. Its pathway is carbohydrate metabolism; tricarboxylic acid cycle; isocitrate from oxaloacetate: step 2/2. In terms of biological role, catalyzes the isomerization of citrate to isocitrate via cis-aconitate. This is Aconitate hydratase, mitochondrial (ACO2) from Sus scrofa (Pig).